The chain runs to 131 residues: Small ribosomal subunit protein uS8 (131 aa).

The protein belongs to the universal ribosomal protein uS8 family. Part of the 30S ribosomal subunit. Contacts proteins S5 and S12.

One of the primary rRNA binding proteins, it binds directly to 16S rRNA central domain where it helps coordinate assembly of the platform of the 30S subunit. This is Small ribosomal subunit protein uS8 from Zymomonas mobilis subsp. mobilis (strain ATCC 31821 / ZM4 / CP4).